A 129-amino-acid chain; its full sequence is Small ribosomal subunit protein uS11 (129 aa).

The protein belongs to the universal ribosomal protein uS11 family. In terms of assembly, part of the 30S ribosomal subunit. Interacts with proteins S7 and S18. Binds to IF-3.

Functionally, located on the platform of the 30S subunit, it bridges several disparate RNA helices of the 16S rRNA. Forms part of the Shine-Dalgarno cleft in the 70S ribosome. The protein is Small ribosomal subunit protein uS11 of Thermosipho africanus (strain TCF52B).